The following is a 396-amino-acid chain: MSVRLVLAKGREKSLLRRHPWVFSGAVARMEGKASLGETIDIVDHQGKWLARGAYSPASQIRARVWTFDPSESIDIAFFSRRLQQAQKWRDWLAQKDGLDSYRLIAGESDGLPGITIDRFGNFLVLQLLSAGAEYQRAALVSALQTLYPECAIYDRSDVAVRKKEGMELTLGLVTGELPPALLPIEEHGMKLLVDIQHGHKTGYYLDQRDSRLATRRYVENKRVLNCFSYTGGFAVSALMGGCSQVVSVDTSQEALDIARQNVELNKLDLSKAEFVRDDVFKLLRTYRDRGEKFDVIVMDPPKFVENKSQLMGACRGYKDINMLAIQLLNEGGILLTFSCSGLMTSDLFQKIIADAAIDAGRDVQFIEQFRQAADHPVIATYPEGLYLKGFACRVM.

The PUA domain maps to S2 to R81.

This sequence belongs to the methyltransferase superfamily. RlmI family.

The protein resides in the cytoplasm. The catalysed reaction is cytidine(1962) in 23S rRNA + S-adenosyl-L-methionine = 5-methylcytidine(1962) in 23S rRNA + S-adenosyl-L-homocysteine + H(+). In terms of biological role, specifically methylates the cytosine at position 1962 (m5C1962) of 23S rRNA. In Shigella boydii serotype 4 (strain Sb227), this protein is Ribosomal RNA large subunit methyltransferase I.